The sequence spans 53 residues: Conotoxin Cal9.2f (53 aa).

The propeptide occupies Lys-1–Leu-6. 3 cysteine pairs are disulfide-bonded: Cys-15/Cys-32, Cys-20/Cys-42, and Cys-22/Cys-47.

In terms of tissue distribution, expressed by the venom duct.

It localises to the secreted. Functionally, probable neurotoxin with unknown target. Possibly targets ion channels. This Californiconus californicus (California cone) protein is Conotoxin Cal9.2f.